Reading from the N-terminus, the 347-residue chain is NADH-ubiquinone oxidoreductase chain 2 (347 aa).

11 helical membrane passes run 1–21 (MNPM…FIVT), 25–45 (HWFM…PVLM), 59–79 (YFLT…INLM), 96–116 (MLIT…FWVP), 122–142 (VSLP…LSLL), 149–169 (VNMN…GWGG), 178–198 (IMAY…VYNP), 201–221 (SLLN…LLIF), 237–257 (APII…LPPL), 274–294 (NSVI…FFYM), and 326–346 (MLPL…LILL).

It belongs to the complex I subunit 2 family. Core subunit of respiratory chain NADH dehydrogenase (Complex I) which is composed of 45 different subunits. Interacts with TMEM242.

It is found in the mitochondrion inner membrane. It carries out the reaction a ubiquinone + NADH + 5 H(+)(in) = a ubiquinol + NAD(+) + 4 H(+)(out). Its function is as follows. Core subunit of the mitochondrial membrane respiratory chain NADH dehydrogenase (Complex I) that is believed to belong to the minimal assembly required for catalysis. Complex I functions in the transfer of electrons from NADH to the respiratory chain. The immediate electron acceptor for the enzyme is believed to be ubiquinone. The polypeptide is NADH-ubiquinone oxidoreductase chain 2 (Crocidura suaveolens gueldenstaedtii (Gueldenstaedt's shrew)).